We begin with the raw amino-acid sequence, 378 residues long: VQNPGASAIQCRAAVLRKEGQPMKIEQVLIQAPGPNQVRVKMVSSGLCATDAHLVWGEQKISDLGGIGCPAIAGHEGAGIVESVGENVTEFVPGDSVLTSFQPQCGQCESCLRPSTNICKKYDLIKSTTDVSTARTLDGQPITSLFGLGVYSEYITTTEHHVFKVNKAANLEHASIISCSVGTGFYSATNLAAVYEGSTCAVWGLGGIGINTLFGCKYNKAKHIIGIDVNEDKREIAAEFGCTEFINPKTLGQPVEQYLMDKFGGVDFAFDCVGYKPILDQAAVSLAIDGTMVIIGAAAKEVKFEMPAFNFLFNRKVVGGLLGSKKTKVAYQELCDMYVDGTYDVDRLVSNKFSLDQINEAFQTLKDGNCIRSIVVFK.

Zn(2+) contacts are provided by Cys48, His75, Cys105, Cys108, Cys111, Cys119, and Cys179.

The protein belongs to the zinc-containing alcohol dehydrogenase family. As to quaternary structure, monomer. Zn(2+) is required as a cofactor.

It catalyses the reaction (2E)-geraniol + NAD(+) = (2E)-geranial + NADH + H(+). The catalysed reaction is (2E,6E)-farnesol + NAD(+) = (2E,6E)-farnesal + NADH + H(+). Its function is as follows. Catalyzes the NAD(+)-dependent oxidation of geraniol to geranial, playing an important role in the biosynthesis of neral, an alarm pheromone. Cannot use NADP(+). Also acts as a farnesol dehydrogenase by catalyzing the oxidation of (2E,6E)-farnesol to (2E,6E)-farnesal, with lower activity compared to geraniol dehydrogenase activity. The chain is Geraniol dehydrogenase from Carpoglyphus lactis (Dried fruit mite).